Consider the following 357-residue polypeptide: Holliday junction branch migration complex subunit RuvB (357 aa).

The tract at residues 1–27 (MGRFSNADGPGDDADEREVTPALTVGE) is disordered. The segment at 1–195 (MGRFSNADGP…FGFTAHMDFY (195 aa)) is large ATPase domain (RuvB-L). ATP is bound by residues Leu34, Arg35, Gly76, Lys79, Thr80, Ser81, 142 to 144 (EDF), Arg185, Tyr195, and Arg232. Thr80 provides a ligand contact to Mg(2+). Residues 196–266 (EPAELERVLA…IAKYALEVYD (71 aa)) are small ATPAse domain (RuvB-S). A head domain (RuvB-H) region spans residues 269 to 357 (ELGLDRLDRA…GGLGQVGLFE (89 aa)). DNA contacts are provided by Arg324 and Arg329.

Belongs to the RuvB family. In terms of assembly, homohexamer. Forms an RuvA(8)-RuvB(12)-Holliday junction (HJ) complex. HJ DNA is sandwiched between 2 RuvA tetramers; dsDNA enters through RuvA and exits via RuvB. An RuvB hexamer assembles on each DNA strand where it exits the tetramer. Each RuvB hexamer is contacted by two RuvA subunits (via domain III) on 2 adjacent RuvB subunits; this complex drives branch migration. In the full resolvosome a probable DNA-RuvA(4)-RuvB(12)-RuvC(2) complex forms which resolves the HJ.

Its subcellular location is the cytoplasm. The enzyme catalyses ATP + H2O = ADP + phosphate + H(+). In terms of biological role, the RuvA-RuvB-RuvC complex processes Holliday junction (HJ) DNA during genetic recombination and DNA repair, while the RuvA-RuvB complex plays an important role in the rescue of blocked DNA replication forks via replication fork reversal (RFR). RuvA specifically binds to HJ cruciform DNA, conferring on it an open structure. The RuvB hexamer acts as an ATP-dependent pump, pulling dsDNA into and through the RuvAB complex. RuvB forms 2 homohexamers on either side of HJ DNA bound by 1 or 2 RuvA tetramers; 4 subunits per hexamer contact DNA at a time. Coordinated motions by a converter formed by DNA-disengaged RuvB subunits stimulates ATP hydrolysis and nucleotide exchange. Immobilization of the converter enables RuvB to convert the ATP-contained energy into a lever motion, pulling 2 nucleotides of DNA out of the RuvA tetramer per ATP hydrolyzed, thus driving DNA branch migration. The RuvB motors rotate together with the DNA substrate, which together with the progressing nucleotide cycle form the mechanistic basis for DNA recombination by continuous HJ branch migration. Branch migration allows RuvC to scan DNA until it finds its consensus sequence, where it cleaves and resolves cruciform DNA. This Mycolicibacterium gilvum (strain PYR-GCK) (Mycobacterium gilvum (strain PYR-GCK)) protein is Holliday junction branch migration complex subunit RuvB.